Here is a 470-residue protein sequence, read N- to C-terminus: Myricetin 3-O-rhamnoside 1,2-glucosyltransferase UGT709G2 (470 aa).

The active-site Proton acceptor is the H20. An an anthocyanidin-binding site is contributed by H20. The active-site Charge relay is the D117. A340, Q342, H357, W360, N361, S362, and E365 together coordinate UDP-alpha-D-glucose. A380 is a binding site for an anthocyanidin. UDP-alpha-D-glucose contacts are provided by D381 and Q382.

Belongs to the UDP-glycosyltransferase family. As to expression, expressed in young cromes.

The enzyme catalyses myricetin 3-O-alpha-L-rhamnoside + UDP-alpha-D-glucose = myricetin 3-O-[beta-D-glucosyl-(1-&gt;2)-alpha-L-rhamnoside] + UDP + H(+). Its pathway is flavonoid metabolism. In terms of biological role, glucosyltransferase involved in montbretin A (MbA) biosynthesis. Catalyzes the glucosylation of myricetin 3-O-alpha-L-rhamnoside (MR) to produce myricetin 3-O-[beta-D-glucosyl-(1-&gt;2)-alpha-L-rhamnoside] (MRG), a precursor of MbA. MbA is a potent inhibitor of human pancreatic alpha-amylase and is being developed as drug candidate to treat type-2 diabetes. In vitro, is able to transfer UDP-xylose with 50-fold less efficiency compared with UDP-glucose. In vitro, can use myricetin 3-O-glucoside and quercetin 3-O-glucoside as substrates, although these two flavonoids may not be physiological substrates in vivo. This is Myricetin 3-O-rhamnoside 1,2-glucosyltransferase UGT709G2 from Crocosmia x crocosmiiflora (Montbretia).